We begin with the raw amino-acid sequence, 92 residues long: MVNRDNSIVALSFFMLFLLVLHLHFETTTAARKPVRVFGPPSSIEWSPPSPPKDDFEWFEINIYKNIEQTAFRPTGQGPSQGIGHKDPPGAP.

A signal peptide spans 1–30 (MVNRDNSIVALSFFMLFLLVLHLHFETTTA). A propeptide spanning residues 31 to 70 (ARKPVRVFGPPSSIEWSPPSPPKDDFEWFEINIYKNIEQT) is cleaved from the precursor. The segment at 70 to 92 (TAFRPTGQGPSQGIGHKDPPGAP) is disordered. A hydroxyproline mark is found at proline 74 and proline 79. A propeptide spanning residues 86–92 (KDPPGAP) is cleaved from the precursor.

It belongs to the C-terminally encoded plant signaling peptide (CEP) family. As to quaternary structure, interacts with CEP receptors (e.g. CEPR1 and CEPR2). Post-translationally, the mature small signaling peptide is generated by proteolytic processing of the longer precursor.

The protein localises to the secreted. Its subcellular location is the extracellular space. It localises to the apoplast. Extracellular signaling peptide that may regulate primary root growth rate and systemic nitrogen (N)-demand signaling. In Arabidopsis thaliana (Mouse-ear cress), this protein is Precursor of CEP12.